Reading from the N-terminus, the 201-residue chain is Keratin-associated protein 4-12 (201 aa).

Repeat copies occupy residues 5–9 (CCGSV), 20–24 (CCRPS), 25–29 (CCQTT), 30–34 (CCRTT), 35–39 (CCRPS), 40–44 (CCVSS), 45–49 (CCRPQ), 50–54 (CCQSV), 55–59 (CCQPT), 60–64 (CCRPS), 65–69 (CCQTT), 70–74 (CCRTT), 75–79 (CCRPS), 80–84 (CCVSS), 85–89 (CCRPQ), 90–94 (CCQSV), 95–99 (CCQPT), 100–104 (CCRPS), 105–109 (CCQTT), 110–114 (CCRTT), 115–119 (CCRPS), 120–124 (CCVSS), 125–129 (CCRPQ), 130–134 (CCQSV), 135–139 (CCQPT), 140–144 (CCRPS), 145–149 (CCISS), 155–159 (CCESS), 160–164 (CCRPC), and 165–169 (CCLRP). The tract at residues 5 to 169 (CCGSVCSDQG…CCRPCCCLRP (165 aa)) is 31 X 5 AA repeats of C-C-[GRQVIL]-[SPTR]-[VSTQPC].

It belongs to the KRTAP type 4 family. Interacts with hair keratins. As to expression, expressed in the hair follicles.

In terms of biological role, in the hair cortex, hair keratin intermediate filaments are embedded in an interfilamentous matrix, consisting of hair keratin-associated proteins (KRTAP), which are essential for the formation of a rigid and resistant hair shaft through their extensive disulfide bond cross-linking with abundant cysteine residues of hair keratins. The matrix proteins include the high-sulfur and high-glycine-tyrosine keratins. This is Keratin-associated protein 4-12 (KRTAP4-12) from Homo sapiens (Human).